A 662-amino-acid chain; its full sequence is Probable protein phosphatase CG10417 (662 aa).

Residues 23 to 564 (AVGASSMQGW…DNMTAVIVQF (542 aa)) enclose the PPM-type phosphatase domain. Mn(2+) contacts are provided by aspartate 57 and glycine 58. 2 disordered regions span residues 219–275 (DGVA…FKHT) and 288–374 (GSND…DEDQ). Composition is skewed to polar residues over residues 238 to 252 (DSNTTTSINDLSTKN), 261 to 275 (NDQNEGSNGTDFKHT), and 288 to 319 (GSNDMTELNQSSKNEFTNSSTSKEFERNINSS). A phosphoserine mark is found at serine 289 and serine 306. Positions 320–334 (QDDEFTDDDADYEEN) are enriched in acidic residues. Over residues 337–347 (VKSPDTSSAES) the composition is skewed to polar residues. A compositionally biased stretch (acidic residues) spans 349–374 (DCTENDDDGDEDGNEDSDEEETDEDQ). Residues aspartate 506 and aspartate 555 each coordinate Mn(2+). The segment covering 591-609 (VSHSLNDQSASKRCASQNA) has biased composition (polar residues). The tract at residues 591–662 (VSHSLNDQSA…KEVTIIVSSS (72 aa)) is disordered. Phosphoserine occurs at positions 592, 594, and 599. A compositionally biased stretch (basic and acidic residues) spans 616–637 (LEKNNSKRLKTDLEQENIKDRT). Position 637 is a phosphothreonine (threonine 637). Residues serine 639 and serine 641 each carry the phosphoserine modification.

The protein belongs to the PP2C family. It depends on Mg(2+) as a cofactor. The cofactor is Mn(2+).

The catalysed reaction is O-phospho-L-seryl-[protein] + H2O = L-seryl-[protein] + phosphate. It catalyses the reaction O-phospho-L-threonyl-[protein] + H2O = L-threonyl-[protein] + phosphate. This chain is Probable protein phosphatase CG10417, found in Drosophila melanogaster (Fruit fly).